The following is an 851-amino-acid chain: Beta-galactosidase BoGH2A (851 aa).

An N-terminal signal peptide occupies residues 1–19; the sequence is MMIGKLKYLMLGGCLILGS. A lipid anchor (N-palmitoyl cysteine) is attached at cysteine 20. Residue cysteine 20 is the site of S-diacylglycerol cysteine attachment. Glutamate 437 functions as the Proton donor in the catalytic mechanism. Residue glutamate 544 is the Nucleophile of the active site.

The protein belongs to the glycosyl hydrolase 2 family.

The protein localises to the cell inner membrane. It catalyses the reaction Hydrolysis of terminal non-reducing beta-D-galactose residues in beta-D-galactosides.. Its pathway is glucan metabolism; xyloglucan degradation. Functionally, catalyzes the hydrolysis of terminal non-reducing beta-D-galactose residues in beta-D-galactosides in xyloglucan degradation, converting 'L' units to 'X' units. This is Beta-galactosidase BoGH2A from Bacteroides ovatus (strain ATCC 8483 / DSM 1896 / JCM 5824 / BCRC 10623 / CCUG 4943 / NCTC 11153).